A 147-amino-acid polypeptide reads, in one-letter code: Prefoldin subunit alpha (147 aa).

It belongs to the prefoldin alpha subunit family. Heterohexamer of two alpha and four beta subunits.

The protein resides in the cytoplasm. In terms of biological role, molecular chaperone capable of stabilizing a range of proteins. Seems to fulfill an ATP-independent, HSP70-like function in archaeal de novo protein folding. The sequence is that of Prefoldin subunit alpha from Methanocorpusculum labreanum (strain ATCC 43576 / DSM 4855 / Z).